The chain runs to 124 residues: Large ribosomal subunit protein uL18 (124 aa).

This sequence belongs to the universal ribosomal protein uL18 family. As to quaternary structure, part of the 50S ribosomal subunit; part of the 5S rRNA/L5/L18/L25 subcomplex. Contacts the 5S and 23S rRNAs.

In terms of biological role, this is one of the proteins that bind and probably mediate the attachment of the 5S RNA into the large ribosomal subunit, where it forms part of the central protuberance. The polypeptide is Large ribosomal subunit protein uL18 (Thermomicrobium roseum (strain ATCC 27502 / DSM 5159 / P-2)).